A 558-amino-acid polypeptide reads, in one-letter code: Asparagine--tRNA ligase, cytoplasmic (558 aa).

The residue at position 71 (Ser71) is a Phosphoserine. Residues 79 to 101 (MWHREQMKSESREKKEAEDSLRR) are disordered. The span at 81 to 101 (HREQMKSESREKKEAEDSLRR) shows a compositional bias: basic and acidic residues. An N6-acetyllysine mark is found at Lys254 and Lys500.

Belongs to the class-II aminoacyl-tRNA synthetase family. In terms of assembly, homodimer.

The protein localises to the cytoplasm. It carries out the reaction tRNA(Asn) + L-asparagine + ATP = L-asparaginyl-tRNA(Asn) + AMP + diphosphate + H(+). Its function is as follows. Catalyzes the attachment of asparagine to tRNA(Asn) in a two-step reaction: asparagine is first activated by ATP to form Asn-AMP and then transferred to the acceptor end of tRNA(Asn). In addition to its essential role in protein synthesis, acts as a signaling molecule that induced migration of CCR3-expressing cells. Has an essential role in the development of the cerebral cortex, being required for proper proliferation of radial glial cells. This is Asparagine--tRNA ligase, cytoplasmic from Macaca fascicularis (Crab-eating macaque).